Here is a 174-residue protein sequence, read N- to C-terminus: Probasin (174 aa).

An N-terminal signal peptide occupies residues 1-18; sequence MMRVIILLLTLHVLGVSS. An intrachain disulfide couples cysteine 77 to cysteine 168.

It belongs to the calycin superfamily. Lipocalin family.

It is found in the secreted. The sequence is that of Probasin (Pbsn) from Mus musculus (Mouse).